Consider the following 1187-residue polypeptide: Protein CHROMATIN REMODELING 8 (1187 aa).

Residues 1–55 form a disordered region; sequence MEEDEDQFLLSSLGVTSANPEDLEQKILDEATKKPDNDEGGSVEEKSTQLEGTNL. Residues 9–19 show a composition bias toward polar residues; sequence LLSSLGVTSAN. Positions 23 to 48 are enriched in basic and acidic residues; it reads LEQKILDEATKKPDNDEGGSVEEKST. A coiled-coil region spans residues 110–170; it reads LQHALATDRL…LKRKLKEIRK (61 aa). Residues 162 to 169 carry the Nuclear localization signal 1 motif; the sequence is KRKLKEIR. Disordered regions lie at residues 223 to 247 and 273 to 343; these read GFER…DENE and DAED…DGRR. Short sequence motifs (nuclear localization signal) lie at residues 290–297 and 310–317; these read LRKLYKTP and GKKSKKTR. A compositionally biased stretch (basic residues) spans 305-328; sequence KKRKAGKKSKKTRPLPEKKWRKRI. In terms of domain architecture, Helicase ATP-binding spans 397 to 594; it reads WELHCQRAGG…WSLFDFVFPG (198 aa). 410 to 417 serves as a coordination point for ATP; that stretch reads DEMGLGKT. The interval 467–501 is disordered; sequence SAQDSGHGKGQGKASESDYDSESSVDSDHEPKSKN. Positions 492–501 are enriched in basic and acidic residues; it reads DSDHEPKSKN. A DEGH box motif is present at residues 545-548; the sequence is DEGH. Residues 730–890 enclose the Helicase C-terminal domain; it reads KVVAEVLKVW…RRFFKARDMK (161 aa). Positions 987-1016 form a coiled coil; it reads NANDEEEKMRLEHQASQVAQRAAEALRQSR. Positions 1050 to 1059 are enriched in polar residues; sequence VNSRLTQTGD. Residues 1050-1075 are disordered; it reads VNSRLTQTGDKPSAIKNGISAGLSSG.

The protein belongs to the SNF2/RAD54 helicase family. Homodimer. Binds DNA.

It is found in the nucleus. Its function is as follows. Essential factor involved in transcription-coupled nucleotide excision repair (TCR) which allows RNA polymerase II-blocking lesions to be rapidly removed from the transcribed strand of active genes. Upon DNA-binding, it locally modifies DNA conformation by wrapping the DNA around itself, thereby modifying the interface between stalled RNA polymerase II and DNA. It is required for transcription-coupled repair complex formation. The polypeptide is Protein CHROMATIN REMODELING 8 (Arabidopsis thaliana (Mouse-ear cress)).